We begin with the raw amino-acid sequence, 775 residues long: Coiled-coil domain-containing protein R3HCC1L (775 aa).

2 stretches are compositionally biased toward basic and acidic residues: residues 1 to 16 and 65 to 112; these read MQQEAERCRVRTKRPD and ESQR…KGAE. Disordered regions lie at residues 1–127 and 235–262; these read MQQE…HRAP and LSSDSETAPSSLETPDGMSKHSPGDISV. Residues 7–27 form an EJC-binding motif; may mediate interaction with the EJC region; it reads RCRVRTKRPDMALYVPKARRG. Over residues 235-247 the composition is skewed to polar residues; that stretch reads LSSDSETAPSSLE. Serine 671 carries the phosphoserine modification. Phosphothreonine is present on threonine 695. Positions 734–766 form a coiled coil; that stretch reads RSKQSKTEREAELRKLQEARERKRLEAKQREDI. Residues 755-775 form a disordered region; the sequence is RKRLEAKQREDIWEGRDQSVV.

As to quaternary structure, may interact with the exon junction complex (EJC) composed at least of CASC3, EIF4A3, MAGOH and RBM8A.

The protein is Coiled-coil domain-containing protein R3HCC1L (R3hcc1l) of Mus musculus (Mouse).